Here is a 352-residue protein sequence, read N- to C-terminus: UDP-3-O-acylglucosamine N-acyltransferase (352 aa).

The Proton acceptor role is filled by His-242.

This sequence belongs to the transferase hexapeptide repeat family. LpxD subfamily. In terms of assembly, homotrimer.

The catalysed reaction is a UDP-3-O-[(3R)-3-hydroxyacyl]-alpha-D-glucosamine + a (3R)-hydroxyacyl-[ACP] = a UDP-2-N,3-O-bis[(3R)-3-hydroxyacyl]-alpha-D-glucosamine + holo-[ACP] + H(+). It participates in bacterial outer membrane biogenesis; LPS lipid A biosynthesis. Functionally, catalyzes the N-acylation of UDP-3-O-acylglucosamine using 3-hydroxyacyl-ACP as the acyl donor. Is involved in the biosynthesis of lipid A, a phosphorylated glycolipid that anchors the lipopolysaccharide to the outer membrane of the cell. This is UDP-3-O-acylglucosamine N-acyltransferase from Alkalilimnicola ehrlichii (strain ATCC BAA-1101 / DSM 17681 / MLHE-1).